We begin with the raw amino-acid sequence, 20 residues long: Bulb protein (20 aa).

Positions 1–20 are disordered; that stretch reads APDVHTRXTQNGLPPGXLPS.

The protein is Bulb protein of Narcissus pseudonarcissus (Daffodil).